The chain runs to 228 residues: Ribose-5-phosphate isomerase A (228 aa).

Substrate contacts are provided by residues 32-35 (TGST), 85-88 (DGAD), and 98-101 (KGGG). The active-site Proton acceptor is the E107. A substrate-binding site is contributed by K125.

The protein belongs to the ribose 5-phosphate isomerase family. As to quaternary structure, homodimer.

It catalyses the reaction aldehydo-D-ribose 5-phosphate = D-ribulose 5-phosphate. The protein operates within carbohydrate degradation; pentose phosphate pathway; D-ribose 5-phosphate from D-ribulose 5-phosphate (non-oxidative stage): step 1/1. Its function is as follows. Catalyzes the reversible conversion of ribose-5-phosphate to ribulose 5-phosphate. This chain is Ribose-5-phosphate isomerase A, found in Ralstonia nicotianae (strain ATCC BAA-1114 / GMI1000) (Ralstonia solanacearum).